A 57-amino-acid chain; its full sequence is Large ribosomal subunit protein bL33 (57 aa).

The protein belongs to the bacterial ribosomal protein bL33 family.

This is Large ribosomal subunit protein bL33 from Akkermansia muciniphila (strain ATCC BAA-835 / DSM 22959 / JCM 33894 / BCRC 81048 / CCUG 64013 / CIP 107961 / Muc).